A 408-amino-acid polypeptide reads, in one-letter code: 3-phosphoshikimate 1-carboxyvinyltransferase (408 aa).

3-phosphoshikimate is bound by residues Lys20, Ser21, and Arg25. Position 20 (Lys20) interacts with phosphoenolpyruvate. Phosphoenolpyruvate is bound at residue Arg111. 3-phosphoshikimate contacts are provided by Ser151, Ser152, Gln153, Ser178, Asp293, and Lys320. Gln153 lines the phosphoenolpyruvate pocket. Catalysis depends on Asp293, which acts as the Proton acceptor. 3 residues coordinate phosphoenolpyruvate: Arg324, Arg365, and Lys389.

This sequence belongs to the EPSP synthase family. As to quaternary structure, monomer.

The protein localises to the cytoplasm. It carries out the reaction 3-phosphoshikimate + phosphoenolpyruvate = 5-O-(1-carboxyvinyl)-3-phosphoshikimate + phosphate. It participates in metabolic intermediate biosynthesis; chorismate biosynthesis. Catalyzes the transfer of the enolpyruvyl moiety of phosphoenolpyruvate (PEP) to the 5-hydroxyl of shikimate-3-phosphate (S3P) to produce enolpyruvyl shikimate-3-phosphate and inorganic phosphate. The protein is 3-phosphoshikimate 1-carboxyvinyltransferase of Sulfurisphaera tokodaii (strain DSM 16993 / JCM 10545 / NBRC 100140 / 7) (Sulfolobus tokodaii).